A 333-amino-acid chain; its full sequence is Heat shock transcription factor, X-linked member 4 (333 aa).

The disordered stretch occupies residues 1–66 (MASQNTEQEY…QDNSPPEDRN (66 aa)). Low complexity predominate over residues 29–39 (GSSPDPNPDSS). The span at 49-60 (AMSQDPGSQDNS) shows a compositional bias: polar residues. The DNA-binding element occupies 79–182 (FRLSFPRKLW…PRLLENIQRK (104 aa)). The interval 227–275 (QGAPSVQGPSGTQSFRRSGMWSKKSATRHPLGNGPPQEPNGPSWEGTSG) is disordered. Residues 228–242 (GAPSVQGPSGTQSFR) show a composition bias toward polar residues.

This sequence belongs to the HSF family.

The protein resides in the nucleus. The chain is Heat shock transcription factor, X-linked member 4 from Homo sapiens (Human).